We begin with the raw amino-acid sequence, 62 residues long: Large ribosomal subunit protein bL28 (62 aa).

It belongs to the bacterial ribosomal protein bL28 family.

In Caldanaerobacter subterraneus subsp. tengcongensis (strain DSM 15242 / JCM 11007 / NBRC 100824 / MB4) (Thermoanaerobacter tengcongensis), this protein is Large ribosomal subunit protein bL28.